A 322-amino-acid polypeptide reads, in one-letter code: Aldo-keto reductase family 1 member C23 (322 aa).

20–24 lines the NADP(+) pocket; that stretch reads GFGTY. Lys-31 contacts substrate. Asp-50 is an NADP(+) binding site. Tyr-55 functions as the Proton donor in the catalytic mechanism. Substrate is bound at residue His-117. NADP(+)-binding positions include 166–167, Gln-190, 216–221, and 269–279; these read SN, YSALGS, and KSYNEKRIKEN.

It belongs to the aldo/keto reductase family. In terms of assembly, monomer. As to expression, detected in follicle granulosa cells (at protein level). Detected in heart, lung, liver, kidney, stomach, uterus, testis, skeletal muscle and granulosa cells of the follicle wall.

Its subcellular location is the cytoplasm. NADP-dependent oxidoreductase that has 20-alpha-hydroxysteroid dehydrogenase activity. The polypeptide is Aldo-keto reductase family 1 member C23 (AKR1C23) (Equus caballus (Horse)).